A 305-amino-acid chain; its full sequence is tRNA pseudouridine synthase B (305 aa).

The Nucleophile role is filled by Asp-48.

The protein belongs to the pseudouridine synthase TruB family. Type 1 subfamily.

The enzyme catalyses uridine(55) in tRNA = pseudouridine(55) in tRNA. Functionally, responsible for synthesis of pseudouridine from uracil-55 in the psi GC loop of transfer RNAs. The chain is tRNA pseudouridine synthase B from Stutzerimonas stutzeri (strain A1501) (Pseudomonas stutzeri).